Here is a 499-residue protein sequence, read N- to C-terminus: MKYVIGIDLGTSAVKTILVNQNGKVCAETSKRYPLIQEKAGYSEQNPEDWVQQTIEALAELVSISNVQAKDIDGISYSGQMHGLVLLDQDRQVLRNAILWNDTRTTPQCIRMTEKFGDHLLDITKNRVLEGFTLPKMLWVKEHEPELFKKTAVFLLPKDYVRFRMTGVIHTEYSDAAGTLLLHITRKEWSNDICNQIGISADICPPLVESHDCVGSLLPHVAAKTGLLEKTKVYAGGADNACGAIGAGILSSGKTLCSIGTSGVILSYEEEKERDFKGKVHFFNHGKKDSFYTMGVTLAAGYSLDWFKRTFAPNESFEQLLQGVEAIPIGANGLLYTPYLVGERTPHADSSIRGSLIGMDGAHNRKHFLRAIMEGITFSLHESIELFREAGKSVHTVVSIGGGAKNDTWLQMQADIFNTRVIKLENEQGPAMGAAMLAAFGSGWFESLEECAEQFIREAAAFYPKAQNVQKYKTLFDLYKNIYTHTKDLNTALKSFRKN.

81–82 contacts substrate; that stretch reads MH. D239 serves as the catalytic Proton acceptor.

This sequence belongs to the FGGY kinase family.

It carries out the reaction D-xylulose + ATP = D-xylulose 5-phosphate + ADP + H(+). In terms of biological role, catalyzes the phosphorylation of D-xylulose to D-xylulose 5-phosphate. This is Xylulose kinase from Bacillus subtilis (strain 168).